Here is a 404-residue protein sequence, read N- to C-terminus: Double-stranded RNA-binding protein 5 (404 aa).

2 consecutive DRBM domains span residues 1-70 and 87-155; these read MYKN…RLSL and VYKN…SLKQ. 3 disordered regions span residues 195 to 236, 263 to 320, and 336 to 362; these read RRRR…STEE, GGRT…RRNA, and RRRP…FSDP. Low complexity predominate over residues 263–280; sequence GGRTQDTASPAPAAAAAS. The span at 302–316 shows a compositional bias: basic residues; that stretch reads AGAHAARRHAARQGG.

Its function is as follows. Binds double-stranded RNA. This chain is Double-stranded RNA-binding protein 5 (DRB5), found in Oryza sativa subsp. japonica (Rice).